The chain runs to 81 residues: Photosystem I iron-sulfur center (81 aa).

4Fe-4S ferredoxin-type domains are found at residues 2-31 (SHSV…MIPW) and 39-68 (IASA…VRVY). Positions 11, 14, 17, 21, 48, 51, 54, and 58 each coordinate [4Fe-4S] cluster.

In terms of assembly, the eukaryotic PSI reaction center is composed of at least 11 subunits. The cofactor is [4Fe-4S] cluster.

It localises to the plastid. The protein resides in the chloroplast thylakoid membrane. It catalyses the reaction reduced [plastocyanin] + hnu + oxidized [2Fe-2S]-[ferredoxin] = oxidized [plastocyanin] + reduced [2Fe-2S]-[ferredoxin]. Apoprotein for the two 4Fe-4S centers FA and FB of photosystem I (PSI); essential for photochemical activity. FB is the terminal electron acceptor of PSI, donating electrons to ferredoxin. The C-terminus interacts with PsaA/B/D and helps assemble the protein into the PSI complex. Required for binding of PsaD and PsaE to PSI. PSI is a plastocyanin-ferredoxin oxidoreductase, converting photonic excitation into a charge separation, which transfers an electron from the donor P700 chlorophyll pair to the spectroscopically characterized acceptors A0, A1, FX, FA and FB in turn. This chain is Photosystem I iron-sulfur center, found in Vitis vinifera (Grape).